The following is a 459-amino-acid chain: Argininosuccinate lyase (459 aa).

The protein belongs to the lyase 1 family. Argininosuccinate lyase subfamily.

The protein localises to the cytoplasm. The catalysed reaction is 2-(N(omega)-L-arginino)succinate = fumarate + L-arginine. It functions in the pathway amino-acid biosynthesis; L-arginine biosynthesis; L-arginine from L-ornithine and carbamoyl phosphate: step 3/3. The sequence is that of Argininosuccinate lyase from Desulforudis audaxviator (strain MP104C).